We begin with the raw amino-acid sequence, 388 residues long: Succinate--CoA ligase [ADP-forming] subunit beta (388 aa).

Positions 9–244 constitute an ATP-grasp domain; sequence KKLFAEYGLP…PSQDDPREAH (236 aa). Residues lysine 46, 53–55, glutamate 99, threonine 102, and glutamate 107 contribute to the ATP site; that span reads GRG. Asparagine 199 and aspartate 213 together coordinate Mg(2+). Residues asparagine 264 and 321 to 323 contribute to the substrate site; that span reads GIV.

It belongs to the succinate/malate CoA ligase beta subunit family. In terms of assembly, heterotetramer of two alpha and two beta subunits. The cofactor is Mg(2+).

The enzyme catalyses succinate + ATP + CoA = succinyl-CoA + ADP + phosphate. The catalysed reaction is GTP + succinate + CoA = succinyl-CoA + GDP + phosphate. It participates in carbohydrate metabolism; tricarboxylic acid cycle; succinate from succinyl-CoA (ligase route): step 1/1. Its function is as follows. Succinyl-CoA synthetase functions in the citric acid cycle (TCA), coupling the hydrolysis of succinyl-CoA to the synthesis of either ATP or GTP and thus represents the only step of substrate-level phosphorylation in the TCA. The beta subunit provides nucleotide specificity of the enzyme and binds the substrate succinate, while the binding sites for coenzyme A and phosphate are found in the alpha subunit. This is Succinate--CoA ligase [ADP-forming] subunit beta from Aeromonas salmonicida (strain A449).